The following is a 611-amino-acid chain: Chaperone protein DnaK (611 aa).

A Phosphothreonine; by autocatalysis modification is found at Thr172. Residues 575 to 611 are disordered; the sequence is AAQAAQAQQDGGNESADKQDDNVVDADYEEVNDDDKK. The span at 596–611 shows a compositional bias: acidic residues; that stretch reads NVVDADYEEVNDDDKK.

This sequence belongs to the heat shock protein 70 family.

Acts as a chaperone. This is Chaperone protein DnaK from Shouchella clausii (strain KSM-K16) (Alkalihalobacillus clausii).